We begin with the raw amino-acid sequence, 419 residues long: Mitochondrial chaperone BCS1 (419 aa).

Residues 2-15 (PLSDFILALKDNPY) are Mitochondrial intermembrane-facing. Residues 16–32 (FGAGFGLVGVGTALALA) form a helical membrane-spanning segment. At 33-419 (RKGVQLGLVA…AIHNAESLRR (387 aa)) the chain is on the mitochondrial matrix side. Residue Tyr-181 is modified to Phosphotyrosine. 230–237 (GPPGCGKS) is a binding site for ATP.

This sequence belongs to the AAA ATPase family. BCS1 subfamily. As to quaternary structure, interacts with LETM1. As to expression, ubiquitous.

It localises to the mitochondrion inner membrane. It carries out the reaction ATP + H2O = ADP + phosphate + H(+). Chaperone necessary for the incorporation of Rieske iron-sulfur protein UQCRFS1 into the mitochondrial respiratory chain complex III. Plays an important role in the maintenance of mitochondrial tubular networks, respiratory chain assembly and formation of the LETM1 complex. The polypeptide is Mitochondrial chaperone BCS1 (BCS1L) (Homo sapiens (Human)).